A 331-amino-acid chain; its full sequence is Phenol 2-monooxygenase, oxygenase component DmpL (331 aa).

This sequence belongs to the TmoE/XamoE family. The multicomponent enzyme phenol hydroxylase is formed by DmpL (P1 component), DmpM (P2 component), DmpN (P3 component), DmpO (P4 component) and DmpP (P5 component). The oxygenase component is a dimer composed of three subunits, DmpL, DmpN and DmpO (DmpLNO). DmpL interacts with the auxiliary protein DmpK (P0 component).

It catalyses the reaction phenol + NADH + O2 + H(+) = catechol + NAD(+) + H2O. It functions in the pathway aromatic compound metabolism; phenol degradation. Its activity is regulated as follows. Requires DmpM for efficient turnover. The activity of DmpLNO oxygenase is inhibited by dithiothreitol (DTT) by a mechanism apparently involving H(2)O(2) generation. In terms of biological role, part of a multicomponent enzyme which catalyzes the degradation of phenol and some of its methylated derivatives. DmpL, DmpN and DmpO form the oxygenase component of the complex. Required for growth on phenol and for in vitro phenol hydroxylase activity. This Pseudomonas sp. (strain CF600) protein is Phenol 2-monooxygenase, oxygenase component DmpL.